The sequence spans 1078 residues: Exportin-1 (1078 aa).

The Importin N-terminal domain occupies alanine 34 to lysine 100.

This sequence belongs to the exportin family. As to quaternary structure, interacts with php4.

It localises to the nucleus. Functionally, receptor for the leucine-rich nuclear export signal (NES). The sequence is that of Exportin-1 (xpo1) from Schizosaccharomyces pombe (strain 972 / ATCC 24843) (Fission yeast).